Reading from the N-terminus, the 244-residue chain is Deoxynucleotide monophosphate kinase (244 aa).

Residue Lys-10 participates in dGMP binding. Arg-11, Gly-13, Asp-15, and Thr-16 together coordinate ATP. 13 residues coordinate dGMP: Ile-36, Lys-37, Arg-70, Arg-137, Gly-144, Thr-145, Val-149, Trp-157, Asp-180, Arg-182, Gln-183, Glu-186, and Thr-213.

The protein belongs to the dNMP kinase family. As to quaternary structure, homodimer. Mg(2+) is required as a cofactor.

The catalysed reaction is dTMP + ATP = dTDP + ADP. It carries out the reaction dGMP + ATP = dGDP + ADP. The enzyme catalyses 5-hydroxymethyl-dCMP + ATP = 5-hydroxymethyl-dCDP + ADP. Its function is as follows. Allows the synthesis of deoxyribonucleoside triphosphates necessary for the rapid viral DNA replication. Phosphorylates dGMP, dTMP and 5-hydroxymethyl-dCMP (hmdCMP) while excluding dCMP and dAMP. The phosphorylation of 5-hydroxymethyl-dCMP represents the first step in the replacement of cytosine by hydroxymethylcytosine in new viral DNA genomes. The polypeptide is Deoxynucleotide monophosphate kinase (1) (Escherichia phage RB69 (Bacteriophage RB69)).